The following is a 391-amino-acid chain: Phosphoglycerate kinase (391 aa).

Substrate-binding positions include 21–23, Arg36, 59–62, Arg113, and Arg146; these read DLN and HLGR. Residues Lys197, Glu319, and 345–348 contribute to the ATP site; that span reads GGDT.

Belongs to the phosphoglycerate kinase family. Monomer.

It is found in the cytoplasm. The enzyme catalyses (2R)-3-phosphoglycerate + ATP = (2R)-3-phospho-glyceroyl phosphate + ADP. It participates in carbohydrate degradation; glycolysis; pyruvate from D-glyceraldehyde 3-phosphate: step 2/5. This is Phosphoglycerate kinase from Xanthomonas euvesicatoria pv. vesicatoria (strain 85-10) (Xanthomonas campestris pv. vesicatoria).